Reading from the N-terminus, the 163-residue chain is NADH-quinone oxidoreductase subunit 9 (163 aa).

2 4Fe-4S ferredoxin-type domains span residues 54 to 84 (LRRYPNGEERCIACKLCEAVCPAQAITIDAE) and 94 to 123 (TRYDIDMTKCIYCGFCQEACPVDAIVEGPN). Positions 64, 67, 70, 74, 103, 106, 109, and 113 each coordinate [4Fe-4S] cluster.

The protein belongs to the complex I 23 kDa subunit family. NDH-1 is composed of at least 14 different subunits, Nqo1 to Nqo14. The complex has a L-shaped structure, with the hydrophobic arm (subunits Nqo7, Nqo8, Nqo10 to Nqo14) embedded in the inner membrane and the hydrophilic peripheral arm (subunits Nqo1 to Nqo6, Nqo9) protruding into the bacterial cytoplasm. The hydrophilic domain contains all the redox centers. It depends on [4Fe-4S] cluster as a cofactor.

Its subcellular location is the cell inner membrane. It carries out the reaction a quinone + NADH + 5 H(+)(in) = a quinol + NAD(+) + 4 H(+)(out). NDH-1 shuttles electrons from NADH, via FMN and iron-sulfur (Fe-S) centers, to quinones in the respiratory chain. The immediate electron acceptor for the enzyme in this species is believed to be ubiquinone. Couples the redox reaction to proton translocation (for every two electrons transferred, four hydrogen ions are translocated across the cytoplasmic membrane), and thus conserves the redox energy in a proton gradient. The chain is NADH-quinone oxidoreductase subunit 9 from Paracoccus denitrificans.